A 485-amino-acid chain; its full sequence is Glutamate--tRNA ligase (485 aa).

The 'HIGH' region signature appears at 11–21 (PSPTGHLHIGN). Residues 252–256 (KLSKR) carry the 'KMSKS' region motif. Lys-255 contributes to the ATP binding site.

This sequence belongs to the class-I aminoacyl-tRNA synthetase family. Glutamate--tRNA ligase type 1 subfamily. Monomer.

It is found in the cytoplasm. The enzyme catalyses tRNA(Glu) + L-glutamate + ATP = L-glutamyl-tRNA(Glu) + AMP + diphosphate. Catalyzes the attachment of glutamate to tRNA(Glu) in a two-step reaction: glutamate is first activated by ATP to form Glu-AMP and then transferred to the acceptor end of tRNA(Glu). This chain is Glutamate--tRNA ligase, found in Bacillus mycoides (strain KBAB4) (Bacillus weihenstephanensis).